Here is a 227-residue protein sequence, read N- to C-terminus: PKHD-type hydroxylase BPSS1206 (227 aa).

The Fe2OG dioxygenase domain maps to 78–178 (KVFPPLFNRY…RVASFFWIQS (101 aa)). Residues H96, D98, and H159 each contribute to the Fe cation site. R169 lines the 2-oxoglutarate pocket.

The cofactor is Fe(2+). L-ascorbate serves as cofactor.

The sequence is that of PKHD-type hydroxylase BPSS1206 from Burkholderia pseudomallei (strain K96243).